The primary structure comprises 282 residues: E3 ubiquitin-protein ligase SIAH1 (282 aa).

Polar residues predominate over residues 1–17 (MSRQTATALPTGTSKCP). The interval 1–22 (MSRQTATALPTGTSKCPPSQRV) is disordered. Residue Ser-19 is modified to Phosphoserine; by ATM and ATR. The RING-type zinc finger occupies 41–76 (CPVCFDYVLPPILQCQSGHLVCSNCRPKLTCCPTCR). Residues 90-282 (VANSVLFPCK…LGINVTISMC (193 aa)) form an SBD region. The SIAH-type zinc finger occupies 93–153 (SVLFPCKYAS…VMPHLMHQHK (61 aa)). Zn(2+)-binding residues include Cys-98, Cys-105, His-117, Cys-121, Cys-128, Cys-135, His-147, and His-152.

The protein belongs to the SINA (Seven in absentia) family. In terms of assembly, homodimer. Interacts with group 1 glutamate receptors GRM1 and GRM5. Interacts with DAB1, which may inhibit its activity. Interacts with UBE2E2. Interacts with PEG3. Interacts with GAPDH; leading to stabilize SIAH1. Component of some large E3 complex composed of UBE2D1, SIAH1, CACYBP/SIP, SKP1, APC and TBL1X. Interacts with UBE2I. Interacts with alpha-tubulin. Interacts with PEG10, which may inhibit its activity. Interacts with KHDRBS3. Interacts with SNCAIP. Interacts with HIPK2; the interaction is promoted by DAZAP2 and results in SIAH1-mediated ubiquitination and subsequent proteasomal degradation of HIPK2. Interacts with DAZAP2; the interaction is decreased following phosphorylation of DAZAP2 by HIPK2. Interacts with Bassoon/BSN and Piccolo/PLCO; these interactions negatively regulate SIAH1 E3 ligase activity. Interacts with DCC. Interacts with AXIN1; catalyzes AXIN1 ubiquitination and subsequent proteasome-mediated ubiquitin-dependent degradation. Post-translationally, phosphorylated on Ser-19 by ATM and ATR. This phosphorylation disrupts SIAH1 interaction with HIPK2, and subsequent proteasomal degradation of HIPK2. In terms of tissue distribution, widely expressed at a low level. Down-regulated in advanced hepatocellular carcinomas.

The protein resides in the cytoplasm. Its subcellular location is the nucleus. The enzyme catalyses S-ubiquitinyl-[E2 ubiquitin-conjugating enzyme]-L-cysteine + [acceptor protein]-L-lysine = [E2 ubiquitin-conjugating enzyme]-L-cysteine + N(6)-ubiquitinyl-[acceptor protein]-L-lysine.. The protein operates within protein modification; protein ubiquitination. Its activity is regulated as follows. Inhibited by interaction with SNCAIP (isoform 2, but not isoform 1). May be inhibited by interaction with PEG10. In terms of biological role, E3 ubiquitin-protein ligase that mediates ubiquitination and subsequent proteasomal degradation of target proteins. E3 ubiquitin ligases accept ubiquitin from an E2 ubiquitin-conjugating enzyme in the form of a thioester and then directly transfers the ubiquitin to targeted substrates. Mediates E3 ubiquitin ligase activity either through direct binding to substrates or by functioning as the essential RING domain subunit of larger E3 complexes. Triggers the ubiquitin-mediated degradation of many substrates, including proteins involved in transcription regulation (ELL2, MYB, POU2AF1, PML and RBBP8), a cell surface receptor (DCC), the cell-surface receptor-type tyrosine kinase FLT3, the cytoplasmic signal transduction molecules (KLF10/TIEG1 and NUMB), an antiapoptotic protein (BAG1), a microtubule motor protein (KIF22), a protein involved in synaptic vesicle function in neurons (SYP), a structural protein (CTNNB1) and SNCAIP. Confers constitutive instability to HIPK2 through proteasomal degradation. It is thereby involved in many cellular processes such as apoptosis, tumor suppression, cell cycle, axon guidance, transcription regulation, spermatogenesis and TNF-alpha signaling. Has some overlapping function with SIAH2. Induces apoptosis in cooperation with PEG3. Upon nitric oxid (NO) generation that follows apoptotic stimulation, interacts with S-nitrosylated GAPDH, mediating the translocation of GAPDH to the nucleus. GAPDH acts as a stabilizer of SIAH1, facilitating the degradation of nuclear proteins. Mediates ubiquitination and degradation of EGLN2 and EGLN3 in response to the unfolded protein response (UPR), leading to their degradation and subsequent stabilization of ATF4. Also part of the Wnt signaling pathway in which it mediates the Wnt-induced ubiquitin-mediated proteasomal degradation of AXIN1. This chain is E3 ubiquitin-protein ligase SIAH1 (SIAH1), found in Homo sapiens (Human).